The sequence spans 450 residues: Asparagine--tRNA ligase (450 aa).

Belongs to the class-II aminoacyl-tRNA synthetase family. As to quaternary structure, homodimer.

Its subcellular location is the cytoplasm. The enzyme catalyses tRNA(Asn) + L-asparagine + ATP = L-asparaginyl-tRNA(Asn) + AMP + diphosphate + H(+). This chain is Asparagine--tRNA ligase, found in Metamycoplasma arthritidis (strain 158L3-1) (Mycoplasma arthritidis).